Reading from the N-terminus, the 388-residue chain is Na(+)/H(+) antiporter NhaA (388 aa).

Over Met-1 to Asp-11 the chain is Cytoplasmic. The chain crosses the membrane as a helical span at residues Ala-12–Ser-31. Over Gly-32–Asn-58 the chain is Periplasmic. A helical membrane pass occupies residues Met-59–Lys-80. Residues Arg-81 to Phe-96 are Cytoplasmic-facing. A helical membrane pass occupies residues Pro-97–Asn-116. Topologically, residues Tyr-117–Thr-122 are periplasmic. A helical membrane pass occupies residues Arg-123–Ala-130. Residues Ala-131–Ile-154 are Cytoplasmic-facing. Residues Phe-155–Thr-176 traverse the membrane as a helical segment. Residues Asn-177–Ser-180 are Periplasmic-facing. A helical membrane pass occupies residues Met-181 to Cys-200. The Cytoplasmic segment spans residues Gly-201 to Arg-204. A helical membrane pass occupies residues Thr-205 to Ser-222. Position 223 (Gly-223) is a topological domain, periplasmic. A helical membrane pass occupies residues Val-224–Phe-236. At Ile-237–His-253 the chain is on the cytoplasmic side. Residues Val-254–Ala-272 form a helical membrane-spanning segment. At Gly-273 to Ser-286 the chain is on the periplasmic side. A helical membrane pass occupies residues Ile-287–Leu-310. Residues Ala-311 to Phe-339 are Cytoplasmic-facing. A helical transmembrane segment spans residues Thr-340–Phe-350. Residues Gly-351 to Leu-357 are Periplasmic-facing. Residues Ile-358–Leu-380 traverse the membrane as a helical segment. Residues Arg-381–Val-388 are Cytoplasmic-facing.

It belongs to the NhaA Na(+)/H(+) (TC 2.A.33) antiporter family.

The protein localises to the cell inner membrane. It carries out the reaction Na(+)(in) + 2 H(+)(out) = Na(+)(out) + 2 H(+)(in). In terms of biological role, na(+)/H(+) antiporter that extrudes sodium in exchange for external protons. In Escherichia coli O9:H4 (strain HS), this protein is Na(+)/H(+) antiporter NhaA.